The following is a 212-amino-acid chain: Ribosomal RNA small subunit methyltransferase G (212 aa).

Residues glycine 80, leucine 85, alanine 131–glutamate 132, and arginine 146 contribute to the S-adenosyl-L-methionine site.

The protein belongs to the methyltransferase superfamily. RNA methyltransferase RsmG family.

It localises to the cytoplasm. The catalysed reaction is guanosine(527) in 16S rRNA + S-adenosyl-L-methionine = N(7)-methylguanosine(527) in 16S rRNA + S-adenosyl-L-homocysteine. Functionally, specifically methylates the N7 position of guanine in position 527 of 16S rRNA. In Xylella fastidiosa (strain M23), this protein is Ribosomal RNA small subunit methyltransferase G.